We begin with the raw amino-acid sequence, 206 residues long: Eukaryotic translation initiation factor isoform 4E-2 (206 aa).

Cysteines 103 and 142 form a disulfide.

The protein belongs to the eukaryotic initiation factor 4E family. In terms of assembly, EIF4F is a multi-subunit complex, the composition of which varies with external and internal environmental conditions. It is composed of at least EIF4A, EIF4E and EIF4G. EIF4E is also known to interact with other partners. In higher plants two isoforms of EIF4F have been identified, named isoform EIF4F and isoform EIF(iso)4F. Isoform EIF4F has subunits p220 and p26, whereas isoform EIF(iso)4F has subunits p82 and p28. In terms of processing, according to the redox status, the Cys-103-Cys-142 disulfide bridge may have a role in regulating protein function by affecting its ability to bind capped mRNA.

Its function is as follows. Recognizes and binds the 7-methylguanosine-containing mRNA cap during an early step in the initiation of protein synthesis and facilitates ribosome binding by inducing the unwinding of the mRNAs secondary structures. In Oryza sativa subsp. japonica (Rice), this protein is Eukaryotic translation initiation factor isoform 4E-2.